A 340-amino-acid chain; its full sequence is MEF2 transcription factor homolog (340 aa).

The 61-residue stretch at 1 to 61 (MGRKKIQITR…NKLFQYASTD (61 aa)) folds into the MADS-box domain. Disordered stretches follow at residues 90-112 (RKEG…TSPV), 193-217 (NQRN…LDFP), 258-283 (LQQR…NGTS), and 312-340 (PNTY…QQLT). The segment covering 200 to 211 (SSTSVAPSSSSS) has biased composition (low complexity). Residues 258–268 (LQQRPVSQPAP) show a composition bias toward polar residues. Positions 269–283 (SISNSSTNGISNGTS) are enriched in low complexity. A compositionally biased stretch (basic and acidic residues) spans 318 to 332 (MEPHSPPEKRPRITT).

This sequence belongs to the MEF2 family. In terms of assembly, interacts with histone deacetylase hda-4 isoform b.

It is found in the nucleus. Functionally, transcription regulator. Binds specifically to the MEF2 element, 5'-[TC]TA[AT][AT][AT][AT]TA[AG]-3' in the regulatory elements of target genes, such as chemoreceptors str-1 and srh-234. Involved in transduction of sensory signals, together with egl-4, kin-29 and hda-4; binding to histone deacetylase hda-4 enables negative modulation of chemoreceptor gene expression in chemosensory neurons. In response to starvation, negatively modulates expression of chemoreceptor srh-234 in ADL sensory neurons, acting in concert with basic helix-loop-helix (bHLH) transcription factors. Plays a role in regulating muscle sensitivity to acetylcholine (ACh) and the magnitude of presynaptic ACh release via a retrograde signal, perhaps by indirectly decreasing Ras-related protein Rab-3 activity. This is MEF2 transcription factor homolog from Caenorhabditis elegans.